We begin with the raw amino-acid sequence, 300 residues long: Peroxisomal 2,4-dienoyl-CoA reductase [(3E)-enoyl-CoA-producing] (300 aa).

Residues 42 to 47, 67 to 71, and aspartate 93 each bind NADP(+); these read GGGSGI and RNLEK. Arginine 67 contacts substrate. Residues arginine 95, phenylalanine 125, and 133-135 each bind substrate; that span reads SFN. NADP(+) is bound by residues lysine 189 and 215-221; that span reads PGPISGT. Arginine 226 contributes to the substrate binding site. Residues 298–300 carry the Microbody targeting signal motif; sequence AKL.

The protein belongs to the short-chain dehydrogenases/reductases (SDR) family. 2,4-dienoyl-CoA reductase subfamily. In terms of assembly, monomer, dimer and oligomer.

The protein resides in the peroxisome. The catalysed reaction is a (2E,4Z)-dienoyl-CoA + NADPH + H(+) = a 4,5-saturated-(3E)-enoyl-CoA + NADP(+). It catalyses the reaction a (2E,4E)-dienoyl-CoA + NADPH + H(+) = a 4,5-saturated-(3E)-enoyl-CoA + NADP(+). The enzyme catalyses (2E,4E)-hexadienoyl-CoA + NADPH + H(+) = (3E)-hexenoyl-CoA + NADP(+). It carries out the reaction (2E,4E)-decadienoyl-CoA + NADPH + H(+) = (3E)-decenoyl-CoA + NADP(+). The catalysed reaction is (2E,4Z,7Z,10Z,13Z,16Z,19Z)-docosaheptaenoyl-CoA + NADPH + H(+) = (3E,7Z,10Z,13Z,16Z,19Z)-docosahexaenoyl-CoA + NADP(+). Its function is as follows. Auxiliary enzyme of beta-oxidation. Participates in the degradation of unsaturated fatty enoyl-CoA esters having double bonds in both even- and odd-numbered positions in peroxisome. Catalyzes the NADP-dependent reduction of 2,4-dienoyl-CoA to yield trans-3-enoyl-CoA. The polypeptide is Peroxisomal 2,4-dienoyl-CoA reductase [(3E)-enoyl-CoA-producing] (decr2) (Danio rerio (Zebrafish)).